Consider the following 129-residue polypeptide: MSRKDARVQAFQTLFQLEIKETDLTIQEAIEFIKDDHSDLDFDFIYWLVTGVKDHQIVLDETIKPHLKDWSIDRLLKSDRIILRMATFEILHSDTPKKVVVNEAVELTKQFSDDDHYKFVNGVLSNIND.

This sequence belongs to the NusB family.

Involved in transcription antitermination. Required for transcription of ribosomal RNA (rRNA) genes. Binds specifically to the boxA antiterminator sequence of the ribosomal RNA (rrn) operons. The chain is Transcription antitermination protein NusB from Staphylococcus epidermidis (strain ATCC 35984 / DSM 28319 / BCRC 17069 / CCUG 31568 / BM 3577 / RP62A).